The chain runs to 122 residues: Large ribosomal subunit protein uL14 (122 aa).

This sequence belongs to the universal ribosomal protein uL14 family. Part of the 50S ribosomal subunit. Forms a cluster with proteins L3 and L19. In the 70S ribosome, L14 and L19 interact and together make contacts with the 16S rRNA in bridges B5 and B8.

Binds to 23S rRNA. Forms part of two intersubunit bridges in the 70S ribosome. The polypeptide is Large ribosomal subunit protein uL14 (Rhodococcus erythropolis (strain PR4 / NBRC 100887)).